A 503-amino-acid polypeptide reads, in one-letter code: MAKRVQHEGGDYRPQKRSKNERNGEGSKVSPSAEAIRNELDPISDATYVQSPALGDLSQIEIDQFLAKHCIKVTDSSEAPPLRPIISFSHLPSSFSKIYDPLSSFSSPTPIQSATWPLLFAGRDVIGIAETGSGKTLAFGLPCIKKILDSGKVKRKHARPAAVIISPTRELAMQIYDQLSKFGASVDIRVTCIYGGVKKDEQREALKTAAIVVATPGRLKDLQNDGSVDLGKVKYLVLDEADRMLDKGFEQDIKDIIRSMPDSKRQTVMFTATWPPSVRDLAATFMTSAVTVTIGGDPSADPRANTRIKQVVEVVKPQEKEARLVQLLNRSQRGAAVCDKVLVFCLYKKEAVRVERLLRTKNFKVAGIHGDLNQHERFKSLEAFKTGAATVLVATDVAARGLDIPSVKLVINVTFPLTVEDYVHRIGRTGRAGADGHAITLFTETDKAQSGALINVLRAAKQDVPDALLKFGTTVKKKQHGAYGAFFKDVDTSKSATKIVFDE.

The span at 1-25 shows a compositional bias: basic and acidic residues; that stretch reads MAKRVQHEGGDYRPQKRSKNERNGE. The disordered stretch occupies residues 1–35; that stretch reads MAKRVQHEGGDYRPQKRSKNERNGEGSKVSPSAEA. A Q motif motif is present at residues 104–112; sequence SFSSPTPIQ. Positions 116-292 constitute a Helicase ATP-binding domain; that stretch reads WPLLFAGRDV…ATFMTSAVTV (177 aa). 129 to 136 contacts ATP; it reads AETGSGKT. Residues 239–242 carry the DEAD box motif; it reads DEAD. The region spanning 307–472 is the Helicase C-terminal domain; that stretch reads RIKQVVEVVK…DVPDALLKFG (166 aa).

Belongs to the DEAD box helicase family. DDX5/DBP2 subfamily.

It localises to the nucleus. Its subcellular location is the nucleolus. The enzyme catalyses ATP + H2O = ADP + phosphate + H(+). Its function is as follows. ATP-dependent RNA helicase required for 60S ribosomal subunit synthesis. Involved in efficient pre-rRNA processing, predominantly at site A3, which is necessary for the normal formation of 25S and 5.8S rRNAs. In Neosartorya fischeri (strain ATCC 1020 / DSM 3700 / CBS 544.65 / FGSC A1164 / JCM 1740 / NRRL 181 / WB 181) (Aspergillus fischerianus), this protein is ATP-dependent RNA helicase dbp3 (dbp3).